We begin with the raw amino-acid sequence, 156 residues long: MRNSSKQEDLIKAFKALLKEEKFSSQGEIVNALQEEGFENINQSKVSRMLTKFGAVRTRNAKMEMVYCLPAELGVPTTTSPLKNLVLDIDFNDALVVIHTSPGAAQLIARLLDSLGKAEGILGTIAGDDTIFITPARSFTVKQLHDAILVLFEQEL.

This sequence belongs to the ArgR family.

It is found in the cytoplasm. It participates in amino-acid biosynthesis; L-arginine biosynthesis [regulation]. Regulates arginine biosynthesis genes. In Erwinia tasmaniensis (strain DSM 17950 / CFBP 7177 / CIP 109463 / NCPPB 4357 / Et1/99), this protein is Arginine repressor.